Reading from the N-terminus, the 214-residue chain is Transcription factor 23 (214 aa).

Disordered regions lie at residues 1 to 86 and 174 to 214; these read MSQR…ARER and DSTT…LGDK. Basic and acidic residues predominate over residues 40–49; the sequence is TRQDPWEERS. A bHLH domain is found at 76–128; the sequence is EASPENAARERSRVRTLRQAFLALQAALPAVPPDTKLSKLDVLVLAASYIAHL. Residues 174–183 are compositionally biased toward polar residues; sequence DSTTASTPSQ.

Forms inactive heterodimeric complexes with TCF3. As to expression, expressed in liver, kidney and spleen.

The protein resides in the nucleus. Inhibits E-box-mediated binding and transactivation of bHLH factors. Inhibitory effect is similar to that of ID proteins. Inhibits the formation of TCF3 and MYOD1 homodimers and heterodimers. Lacks DNA binding activity. Seems to play a role in the inhibition of myogenesis. In Homo sapiens (Human), this protein is Transcription factor 23 (TCF23).